Here is a 190-residue protein sequence, read N- to C-terminus: Mediator of RNA polymerase II transcription subunit 28 (190 aa).

A coiled-coil region spans residues 76–108 (MLIKDENQDLSIEIQRKEALLQKHYNRLEEWKA).

The protein belongs to the Mediator complex subunit 28 family. Component of the Mediator complex.

It is found in the nucleus. In terms of biological role, component of the Mediator complex, a coactivator involved in the regulated transcription of nearly all RNA polymerase II-dependent genes. Mediator functions as a bridge to convey information from gene-specific regulatory proteins to the basal RNA polymerase II transcription machinery. Mediator is recruited to promoters by direct interactions with regulatory proteins and serves as a scaffold for the assembly of a functional preinitiation complex with RNA polymerase II and the general transcription factors. The sequence is that of Mediator of RNA polymerase II transcription subunit 28 (MED28) from Drosophila pseudoobscura pseudoobscura (Fruit fly).